A 787-amino-acid chain; its full sequence is Signal transducer and activator of transcription 5B (787 aa).

Tyr-90 is modified (phosphotyrosine). Ser-128 is subject to Phosphoserine. The SH2 domain maps to 589–686 (WNDGAILGFV…EVYSKYYTPV (98 aa)). Tyr-682 carries the post-translational modification Phosphotyrosine. Tyr-699 carries the phosphotyrosine; by HCK, JAK and PTK6 modification.

It belongs to the transcription factor STAT family. Upon activation, forms a homodimer or a heterodimer with a related family member. Binds NR3C1. Interacts with NCOA1. Interacts with NMI. Interacts with SOCS7. Interacts (via SH2 domain) with INSR. Interacts with CPEB3; this inhibits STAT5B-mediated transcriptional activation. Tyrosine phosphorylated in response to signaling via activated KIT, resulting in translocation to the nucleus. Tyrosine phosphorylated in response to signaling via activated FLT3; wild-type FLT3 results in much weaker phosphorylation than constitutively activated mutant FLT3. Alternatively, can be phosphorylated by JAK2. Phosphorylation at Tyr-699 by PTK6 or HCK leads to an increase of its transcriptional activity.

It localises to the cytoplasm. Its subcellular location is the nucleus. Functionally, carries out a dual function: signal transduction and activation of transcription. Mediates cellular responses to the cytokine KITLG/SCF and other growth factors. Binds to the GAS element and activates PRL-induced transcription. Positively regulates hematopoietic/erythroid differentiation. The protein is Signal transducer and activator of transcription 5B (STAT5B) of Bos taurus (Bovine).